Reading from the N-terminus, the 153-residue chain is Deoxyuridine 5'-triphosphate nucleotidohydrolase (153 aa).

Residues 71-73, Asn84, 88-90, and Lys98 contribute to the substrate site; these read RSG and TID.

Belongs to the dUTPase family. The cofactor is Mg(2+).

It catalyses the reaction dUTP + H2O = dUMP + diphosphate + H(+). It participates in pyrimidine metabolism; dUMP biosynthesis; dUMP from dCTP (dUTP route): step 2/2. Functionally, this enzyme is involved in nucleotide metabolism: it produces dUMP, the immediate precursor of thymidine nucleotides and it decreases the intracellular concentration of dUTP so that uracil cannot be incorporated into DNA. The protein is Deoxyuridine 5'-triphosphate nucleotidohydrolase of Wolbachia pipientis subsp. Culex pipiens (strain wPip).